Here is a 55-residue protein sequence, read N- to C-terminus: Small ribosomal subunit protein uS14 (55 aa).

Zn(2+)-binding residues include Cys20, Cys23, Cys38, and Cys41.

Belongs to the universal ribosomal protein uS14 family. The cofactor is Zn(2+).

In Dictyostelium discoideum (Social amoeba), this protein is Small ribosomal subunit protein uS14 (rps29).